The following is a 409-amino-acid chain: Peptidase T (409 aa).

A Zn(2+)-binding site is contributed by histidine 78. Residue aspartate 80 is part of the active site. Position 141 (aspartate 141) interacts with Zn(2+). Glutamate 175 functions as the Proton acceptor in the catalytic mechanism. Residues glutamate 176, aspartate 198, and histidine 380 each contribute to the Zn(2+) site.

The protein belongs to the peptidase M20B family. The cofactor is Zn(2+).

The protein localises to the cytoplasm. It carries out the reaction Release of the N-terminal residue from a tripeptide.. In terms of biological role, cleaves the N-terminal amino acid of tripeptides. This is Peptidase T from Caldanaerobacter subterraneus subsp. tengcongensis (strain DSM 15242 / JCM 11007 / NBRC 100824 / MB4) (Thermoanaerobacter tengcongensis).